The primary structure comprises 200 residues: Glycerol-3-phosphate acyltransferase (200 aa).

6 consecutive transmembrane segments (helical) span residues 9-29, 54-74, 81-101, 112-132, 140-160, and 165-185; these read IIIG…AYFW, VPGM…VLLA, DIAV…PLWL, GAGA…LVWL, YVSL…ALLN, and YLIF…SNIG.

Belongs to the PlsY family. In terms of assembly, probably interacts with PlsX.

The protein resides in the cell membrane. The enzyme catalyses an acyl phosphate + sn-glycerol 3-phosphate = a 1-acyl-sn-glycero-3-phosphate + phosphate. It participates in lipid metabolism; phospholipid metabolism. Its function is as follows. Catalyzes the transfer of an acyl group from acyl-phosphate (acyl-PO(4)) to glycerol-3-phosphate (G3P) to form lysophosphatidic acid (LPA). This enzyme utilizes acyl-phosphate as fatty acyl donor, but not acyl-CoA or acyl-ACP. This is Glycerol-3-phosphate acyltransferase from Desulforamulus reducens (strain ATCC BAA-1160 / DSM 100696 / MI-1) (Desulfotomaculum reducens).